A 423-amino-acid polypeptide reads, in one-letter code: Glutamyl-tRNA(Gln) amidotransferase subunit A (423 aa).

Positions 1 to 20 are disordered; it reads MSHNAFITEETIEPTDDGPL. Positions 10–19 are enriched in acidic residues; sequence ETIEPTDDGP. Residues Lys-28 and Ser-103 each act as charge relay system in the active site. The tract at residues 75 to 108 is disordered; the sequence is EFGMGTTTETSAFGPTENPAAEGRVPGGSSGGSA. Ser-127 functions as the Acyl-ester intermediate in the catalytic mechanism. Positions 183–206 are disordered; the sequence is DERDGTTREPPAGQPTYADAADGD.

It belongs to the amidase family. GatA subfamily. Heterotrimer of A, B and C subunits.

It catalyses the reaction L-glutamyl-tRNA(Gln) + L-glutamine + ATP + H2O = L-glutaminyl-tRNA(Gln) + L-glutamate + ADP + phosphate + H(+). Allows the formation of correctly charged Gln-tRNA(Gln) through the transamidation of misacylated Glu-tRNA(Gln) in organisms which lack glutaminyl-tRNA synthetase. The reaction takes place in the presence of glutamine and ATP through an activated gamma-phospho-Glu-tRNA(Gln). The chain is Glutamyl-tRNA(Gln) amidotransferase subunit A from Natronomonas pharaonis (strain ATCC 35678 / DSM 2160 / CIP 103997 / JCM 8858 / NBRC 14720 / NCIMB 2260 / Gabara) (Halobacterium pharaonis).